The sequence spans 396 residues: Elongation factor Tu (396 aa).

Positions 10–206 (KPHCNIGTIG…NVDEYIPQPE (197 aa)) constitute a tr-type G domain. The G1 stretch occupies residues 19 to 26 (GHVDHGKT). A GTP-binding site is contributed by 19–26 (GHVDHGKT). Residue T26 participates in Mg(2+) binding. The tract at residues 60-64 (GITIS) is G2. A G3 region spans residues 81-84 (DCPG). Residues 81–85 (DCPGH) and 136–139 (NKCD) each bind GTP. Residues 136–139 (NKCD) are G4. A G5 region spans residues 174–176 (SAL).

Belongs to the TRAFAC class translation factor GTPase superfamily. Classic translation factor GTPase family. EF-Tu/EF-1A subfamily. Monomer.

The protein resides in the cytoplasm. The catalysed reaction is GTP + H2O = GDP + phosphate + H(+). Functionally, GTP hydrolase that promotes the GTP-dependent binding of aminoacyl-tRNA to the A-site of ribosomes during protein biosynthesis. This chain is Elongation factor Tu, found in Bradyrhizobium diazoefficiens (strain JCM 10833 / BCRC 13528 / IAM 13628 / NBRC 14792 / USDA 110).